Here is a 130-residue protein sequence, read N- to C-terminus: Transcription antitermination protein NusB (130 aa).

This sequence belongs to the NusB family.

In terms of biological role, involved in transcription antitermination. Required for transcription of ribosomal RNA (rRNA) genes. Binds specifically to the boxA antiterminator sequence of the ribosomal RNA (rrn) operons. This Bacillus cereus (strain ATCC 10987 / NRS 248) protein is Transcription antitermination protein NusB.